Reading from the N-terminus, the 593-residue chain is uncharacterized protein (593 aa).

Transmembrane regions (helical) follow at residues 21–41 (PAVF…SVVY), 60–80 (VGWW…YCGI), 97–117 (FSFW…GLVF), 148–168 (MALT…VVGL), 204–224 (VDVI…GFGI), 243–263 (WMVG…VSGV), 275–295 (MALA…LFLL), 328–348 (WTIF…MFIA), 359–379 (FIGA…TIFG), 410–430 (GLPI…FFFV), 457–477 (VYWA…GGAG), and 485–505 (AAIA…YAMT).

Belongs to the BCCT transporter (TC 2.A.15) family.

It is found in the cell membrane. This is an uncharacterized protein from Mycobacterium tuberculosis (strain CDC 1551 / Oshkosh).